A 339-amino-acid polypeptide reads, in one-letter code: DNA-directed RNA polymerase subunit alpha (339 aa).

The interval 1–235 (MVLQKNWQSL…DQLQLFINFD (235 aa)) is alpha N-terminal domain (alpha-NTD). An alpha C-terminal domain (alpha-CTD) region spans residues 251 to 339 (FNRNLLRKVD…DLAKRLDEPF (89 aa)).

This sequence belongs to the RNA polymerase alpha chain family. Homodimer. The RNAP catalytic core consists of 2 alpha, 1 beta, 1 beta' and 1 omega subunit. When a sigma factor is associated with the core the holoenzyme is formed, which can initiate transcription.

The catalysed reaction is RNA(n) + a ribonucleoside 5'-triphosphate = RNA(n+1) + diphosphate. Functionally, DNA-dependent RNA polymerase catalyzes the transcription of DNA into RNA using the four ribonucleoside triphosphates as substrates. The chain is DNA-directed RNA polymerase subunit alpha from Gluconacetobacter diazotrophicus (strain ATCC 49037 / DSM 5601 / CCUG 37298 / CIP 103539 / LMG 7603 / PAl5).